The chain runs to 351 residues: Transmembrane protein 255A (351 aa).

4 helical membrane-spanning segments follow: residues 30-50 (IYVTVTLLIVSMLILTVGLAA), 57-77 (VTVGGYYPGVILGFGSFLGII), 89-109 (LVASIVFISFGVIAAFCCAIV), and 226-246 (TILNIVGLFLGIITAAVLGGF). The tract at residues 302 to 331 (FPSSPPSGLSDEQEPQSPSPSPSYMWSSSA) is disordered.

It belongs to the TMEM255 family.

The protein resides in the membrane. The polypeptide is Transmembrane protein 255A (Tmem255a) (Mus musculus (Mouse)).